The primary structure comprises 478 residues: Mannose-1-phosphate guanylyltransferase (478 aa).

Belongs to the mannose-6-phosphate isomerase type 2 family.

It carries out the reaction alpha-D-mannose 1-phosphate + GTP + H(+) = GDP-alpha-D-mannose + diphosphate. It participates in nucleotide-sugar biosynthesis; GDP-alpha-D-mannose biosynthesis; GDP-alpha-D-mannose from alpha-D-mannose 1-phosphate (GTP route): step 1/1. Functionally, involved in the biosynthesis of the capsular polysaccharide colanic acid. This is Mannose-1-phosphate guanylyltransferase (manC) from Escherichia coli (strain K12).